The chain runs to 182 residues: Orotate phosphoribosyltransferase (182 aa).

5-phospho-alpha-D-ribose 1-diphosphate-binding positions include arginine 96, lysine 97, lysine 100, histidine 102, and 122–130 (EDTSTTGGS). Residues threonine 126 and arginine 154 each coordinate orotate.

This sequence belongs to the purine/pyrimidine phosphoribosyltransferase family. PyrE subfamily. In terms of assembly, homodimer. Requires Mg(2+) as cofactor.

The enzyme catalyses orotidine 5'-phosphate + diphosphate = orotate + 5-phospho-alpha-D-ribose 1-diphosphate. It participates in pyrimidine metabolism; UMP biosynthesis via de novo pathway; UMP from orotate: step 1/2. Functionally, catalyzes the transfer of a ribosyl phosphate group from 5-phosphoribose 1-diphosphate to orotate, leading to the formation of orotidine monophosphate (OMP). The polypeptide is Orotate phosphoribosyltransferase (Streptomyces coelicolor (strain ATCC BAA-471 / A3(2) / M145)).